The following is a 535-amino-acid chain: Peptide chain release factor 3 (535 aa).

Residues 8–278 form the tr-type G domain; it reads ARRRTFAIIS…VDQAPAPGPR (271 aa). Residues 17-24, 85-89, and 139-142 contribute to the GTP site; these read SHPDAGKT, DTPGH, and NKLD.

Belongs to the TRAFAC class translation factor GTPase superfamily. Classic translation factor GTPase family. PrfC subfamily.

The protein localises to the cytoplasm. Increases the formation of ribosomal termination complexes and stimulates activities of RF-1 and RF-2. It binds guanine nucleotides and has strong preference for UGA stop codons. It may interact directly with the ribosome. The stimulation of RF-1 and RF-2 is significantly reduced by GTP and GDP, but not by GMP. The polypeptide is Peptide chain release factor 3 (Bordetella parapertussis (strain 12822 / ATCC BAA-587 / NCTC 13253)).